The sequence spans 460 residues: ATP synthase subunit beta (460 aa).

150–157 (GGAGVGKT) provides a ligand contact to ATP.

This sequence belongs to the ATPase alpha/beta chains family. F-type ATPases have 2 components, CF(1) - the catalytic core - and CF(0) - the membrane proton channel. CF(1) has five subunits: alpha(3), beta(3), gamma(1), delta(1), epsilon(1). CF(0) has three main subunits: a(1), b(2) and c(9-12). The alpha and beta chains form an alternating ring which encloses part of the gamma chain. CF(1) is attached to CF(0) by a central stalk formed by the gamma and epsilon chains, while a peripheral stalk is formed by the delta and b chains.

The protein localises to the cell inner membrane. It catalyses the reaction ATP + H2O + 4 H(+)(in) = ADP + phosphate + 5 H(+)(out). In terms of biological role, produces ATP from ADP in the presence of a proton gradient across the membrane. The catalytic sites are hosted primarily by the beta subunits. The chain is ATP synthase subunit beta from Pectobacterium atrosepticum (strain SCRI 1043 / ATCC BAA-672) (Erwinia carotovora subsp. atroseptica).